A 440-amino-acid polypeptide reads, in one-letter code: Enolase (440 aa).

Glutamine 168 contributes to the (2R)-2-phosphoglycerate binding site. The Proton donor role is filled by glutamate 210. Mg(2+) contacts are provided by aspartate 249, glutamate 300, and aspartate 326. Positions 351, 380, 381, and 402 each coordinate (2R)-2-phosphoglycerate. The Proton acceptor role is filled by lysine 351.

Belongs to the enolase family. The cofactor is Mg(2+).

It localises to the cytoplasm. The protein localises to the secreted. It is found in the cell surface. It catalyses the reaction (2R)-2-phosphoglycerate = phosphoenolpyruvate + H2O. It functions in the pathway carbohydrate degradation; glycolysis; pyruvate from D-glyceraldehyde 3-phosphate: step 4/5. Its function is as follows. Catalyzes the reversible conversion of 2-phosphoglycerate (2-PG) into phosphoenolpyruvate (PEP). It is essential for the degradation of carbohydrates via glycolysis. This Ureaplasma parvum serovar 3 (strain ATCC 27815 / 27 / NCTC 11736) protein is Enolase.